We begin with the raw amino-acid sequence, 402 residues long: Acyl-[acyl-carrier-protein] desaturase 3, chloroplastic (402 aa).

2 disordered regions span residues 1-25 (MSLT…GGAS) and 38-66 (VGGI…THTL). The N-terminal 32 residues, 1 to 32 (MSLTGCLPPRPPCSMRRRTSGGGASVSPVVVM), are a transit peptide targeting the chloroplast. Glu139, Glu178, His181, Glu231, Glu264, and His267 together coordinate Fe cation.

It belongs to the fatty acid desaturase type 2 family. Homodimer. It depends on Fe(2+) as a cofactor.

The protein localises to the plastid. It localises to the chloroplast. The protein operates within lipid metabolism; fatty acid metabolism. Functionally, introduces a cis double bond in the acyl chain of an acyl-[acyl-carrier protein]. The sequence is that of Acyl-[acyl-carrier-protein] desaturase 3, chloroplastic from Oryza sativa subsp. indica (Rice).